A 544-amino-acid chain; its full sequence is Chaperonin GroEL (544 aa).

ATP contacts are provided by residues 30–33 (TLGP), lysine 51, 87–91 (DGTTT), glycine 415, and aspartate 495.

The protein belongs to the chaperonin (HSP60) family. In terms of assembly, forms a cylinder of 14 subunits composed of two heptameric rings stacked back-to-back. Interacts with the co-chaperonin GroES.

It is found in the cytoplasm. The catalysed reaction is ATP + H2O + a folded polypeptide = ADP + phosphate + an unfolded polypeptide.. Functionally, together with its co-chaperonin GroES, plays an essential role in assisting protein folding. The GroEL-GroES system forms a nano-cage that allows encapsulation of the non-native substrate proteins and provides a physical environment optimized to promote and accelerate protein folding. This chain is Chaperonin GroEL, found in Neisseria meningitidis serogroup B (strain ATCC BAA-335 / MC58).